Consider the following 308-residue polypeptide: 1,4-dihydroxy-2-naphthoate octaprenyltransferase (308 aa).

The next 9 helical transmembrane spans lie at 22-42 (TLPLALASIFTGSALGYWANP), 47-67 (GLVMVLCLLTTILLQVLSNFA), 101-121 (WGLILMVMASFLSGSFLIGIA), 129-149 (FAFAGLGILAIVAAITYTVGV), 153-173 (GYMGLGDISVLVFFGLLGVGG), 186-206 (IILPAIGSGLLASAVLNINNL), 235-255 (ILLSVAALCYLAFAVATAISW), 256-276 (TNYLFVLAMPLLAKHAIFVYC), and 286-306 (ILAQMSMISLLINILFSLGLL).

Belongs to the MenA family. Type 1 subfamily.

It localises to the cell inner membrane. It carries out the reaction an all-trans-polyprenyl diphosphate + 1,4-dihydroxy-2-naphthoate + H(+) = a 2-demethylmenaquinol + CO2 + diphosphate. The protein operates within quinol/quinone metabolism; menaquinone biosynthesis; menaquinol from 1,4-dihydroxy-2-naphthoate: step 1/2. Its function is as follows. Conversion of 1,4-dihydroxy-2-naphthoate (DHNA) to demethylmenaquinone (DMK). The protein is 1,4-dihydroxy-2-naphthoate octaprenyltransferase of Haemophilus influenzae (strain ATCC 51907 / DSM 11121 / KW20 / Rd).